The following is a 428-amino-acid chain: Cytokine-dependent hematopoietic cell linker (428 aa).

A disordered region spans residues 1–22 (MNRQGNRKTTKEGSNDLKFQNF). Phosphotyrosine; by LYN occurs at positions 69 and 96. Disordered stretches follow at residues 135-198 (DKPI…EVQR) and 244-271 (SSSF…PQRC). Positions 159 to 164 (PLPPPR) are mediates interaction with PLCG1; essential for BCR signaling; involved in restoration of BCR-induced calcium response and ERK2 and JNK2 activation in BLNK-deficient cells expressing LAT. A mediates interaction with LAT, GRB2, and FGR; involved in translocation to the glycolipid-enriched microdomain and restoration of BCR-induced calcium response in BLNK-deficient DT40 cells expressing LAT region spans residues 178-180 (PEP). The span at 244 to 253 (SSSFTTSNHS) shows a compositional bias: low complexity. The region spanning 309–419 (WYIGEYSRQA…RKQCHLTQPL (111 aa)) is the SH2 domain.

When phosphorylated, interacts with PLCG1, PLCG2, GRB2, VAV and LAT. Interacts with LBR and AGO2. Interacts with FGR. Part of a complex consisting of CLNK, SKAP1 and FYB1. Interacts (via SH2 domain) with FYB1; this interaction allows SKAP1 and FYB1 to promote tyrosine phosphorylation of CLNK by LYN. Interacts (via SH2 domain) with MAP4K1. In terms of processing, tyrosine-phosphorylated upon BCR cross-linking. Tyrosine phosphorylation at both Tyr-69 and Tyr-96 are required for BCR-induced calcium response and are essential to restore PLCG2-mediated signaling in BLNK-deficient DT40 cells, but this phosphorylation is dispensable in cells expressing LAT. Interacts with the SH2 domain of PLCG1 via phosphorylated Tyr-96. Tyrosine phosphorylation is increased when complexed with SKAP1 and FYB1.

The protein resides in the cytoplasm. In terms of biological role, an adapter protein which plays a role in the regulation of immunoreceptor signaling, including PLC-gamma-mediated B-cell antigen receptor (BCR) signaling and FC-epsilon R1-mediated mast cell degranulation. Together with FGR, it acts as a negative regulator of natural killer cell-activating receptors and inhibits interferon-gamma production. Acts as a positive regulator of both T-cell receptor and natural killer T (NKT) cell receptor signaling in CD4-positive NKT cells. Together with MAP4K1, it enhances CD3-triggered activation of T-cells and subsequent IL2 production. May be involved in tumor necrosis factor induced cell death by promoting reactive oxidative species generation, and MLKL oligomerization, ultimately leading to necrosis. Involved in phosphorylation of LAT. May be involved in high affinity immunoglobulin epsilon receptor signaling in mast cells. The protein is Cytokine-dependent hematopoietic cell linker (CLNK) of Homo sapiens (Human).